Consider the following 122-residue polypeptide: Small ribosomal subunit protein uS13 (122 aa).

A disordered region spans residues 95–122; that stretch reads GLPVRGQRTHTNARTRKGPAKPIAGKKK.

This sequence belongs to the universal ribosomal protein uS13 family. In terms of assembly, part of the 30S ribosomal subunit. Forms a loose heterodimer with protein S19. Forms two bridges to the 50S subunit in the 70S ribosome.

Located at the top of the head of the 30S subunit, it contacts several helices of the 16S rRNA. In the 70S ribosome it contacts the 23S rRNA (bridge B1a) and protein L5 of the 50S subunit (bridge B1b), connecting the 2 subunits; these bridges are implicated in subunit movement. Contacts the tRNAs in the A and P-sites. The chain is Small ribosomal subunit protein uS13 from Caulobacter sp. (strain K31).